Here is a 180-residue protein sequence, read N- to C-terminus: Interleukin-17B (180 aa).

Positions 1–20 are cleaved as a signal peptide; the sequence is MDWPHNLLFLLTISIFLGLG. Residues 22-44 form a disordered region; the sequence is PRSPKSKRKGQGRPGPLAPGPHQ. Asn-75 is a glycosylation site (N-linked (GlcNAc...) asparagine). Cystine bridges form between Cys-121/Cys-176 and Cys-126/Cys-178.

Belongs to the IL-17 family. Expressed in adult pancreas, small intestine, stomach, spinal cord and testis. Less pronounced expression in prostate, colon mucosal lining, and ovary.

It is found in the secreted. Its function is as follows. Stimulates the release of tumor necrosis factor alpha and IL-1-beta from the monocytic cell line THP-1. The sequence is that of Interleukin-17B (IL17B) from Homo sapiens (Human).